We begin with the raw amino-acid sequence, 255 residues long: Type III pantothenate kinase (255 aa).

An ATP-binding site is contributed by 6-13 (DIGNSNID). 107–110 (GADL) serves as a coordination point for substrate. The active-site Proton acceptor is the Asp109. Asp129 is a K(+) binding site. Thr132 provides a ligand contact to ATP. Thr183 lines the substrate pocket.

This sequence belongs to the type III pantothenate kinase family. Homodimer. NH4(+) serves as cofactor. The cofactor is K(+).

The protein resides in the cytoplasm. The enzyme catalyses (R)-pantothenate + ATP = (R)-4'-phosphopantothenate + ADP + H(+). It participates in cofactor biosynthesis; coenzyme A biosynthesis; CoA from (R)-pantothenate: step 1/5. In terms of biological role, catalyzes the phosphorylation of pantothenate (Pan), the first step in CoA biosynthesis. The chain is Type III pantothenate kinase from Dictyoglomus turgidum (strain DSM 6724 / Z-1310).